The sequence spans 193 residues: Alpha-S2-casein (193 aa).

An N-terminal signal peptide occupies residues 1-15; sequence MKFFIFTCLLAVVLA. Ser-23, Ser-24, Ser-25, Ser-28, Ser-47, Ser-68, Ser-123, Ser-125, Ser-128, and Ser-136 each carry phosphoserine.

It belongs to the alpha-casein family. In terms of tissue distribution, mammary gland specific. Secreted in milk.

The protein resides in the secreted. Functionally, important role in the capacity of milk to transport calcium phosphate. This is Alpha-S2-casein (CSN1S2) from Camelus dromedarius (Dromedary).